Here is a 442-residue protein sequence, read N- to C-terminus: tRNA-2-methylthio-N(6)-dimethylallyladenosine synthase (442 aa).

Residues 2 to 120 form the MTTase N-terminal domain; it reads KKVFIRTFGC…LPKMIVDKET (119 aa). [4Fe-4S] cluster contacts are provided by C11, C49, C83, C157, C161, and C164. The Radical SAM core domain occupies 143-375; it reads RVEGGAAFVS…NEVIEAETAR (233 aa). The region spanning 378 to 441 is the TRAM domain; the sequence is QTMVGTVQRC…TFSLRGKVVE (64 aa).

Belongs to the methylthiotransferase family. MiaB subfamily. As to quaternary structure, monomer. [4Fe-4S] cluster is required as a cofactor.

It localises to the cytoplasm. The enzyme catalyses N(6)-dimethylallyladenosine(37) in tRNA + (sulfur carrier)-SH + AH2 + 2 S-adenosyl-L-methionine = 2-methylsulfanyl-N(6)-dimethylallyladenosine(37) in tRNA + (sulfur carrier)-H + 5'-deoxyadenosine + L-methionine + A + S-adenosyl-L-homocysteine + 2 H(+). Functionally, catalyzes the methylthiolation of N6-(dimethylallyl)adenosine (i(6)A), leading to the formation of 2-methylthio-N6-(dimethylallyl)adenosine (ms(2)i(6)A) at position 37 in tRNAs that read codons beginning with uridine. This Neisseria meningitidis serogroup B (strain ATCC BAA-335 / MC58) protein is tRNA-2-methylthio-N(6)-dimethylallyladenosine synthase.